Reading from the N-terminus, the 310-residue chain is Collagen-like protein V6 (310 aa).

The segment covering 1–41 (MSLSTLFSPNTYNINSKSQTLNNLPSNPTSQTNTLWSNNAY) has biased composition (polar residues). Residues 1–183 (MSLSTLFSPN…GDPGAKGDPG (183 aa)) are disordered. 2 Collagen-like domains span residues 61 to 119 (GQKG…KGQA) and 123 to 182 (GLKG…KGDP). Basic and acidic residues predominate over residues 92–101 (SGDKGDKGDS). N-linked (GlcNAc...) asparagine; by host glycans are attached at residues Asn227 and Asn264.

This sequence belongs to the sputnik virus V6 family.

In Sputnik virophage, this protein is Collagen-like protein V6.